The primary structure comprises 323 residues: uncharacterized protein (323 aa).

Its subcellular location is the mitochondrion. This is an uncharacterized protein from Schizosaccharomyces pombe (strain 972 / ATCC 24843) (Fission yeast).